We begin with the raw amino-acid sequence, 542 residues long: Peptide chain release factor 3 (542 aa).

A tr-type G domain is found at 14-283 (DKRRNFAIIS…AFLEYALKPG (270 aa)). GTP contacts are provided by residues 23-30 (SHPDAGKT), 91-95 (DTPGH), and 145-148 (NKMD).

This sequence belongs to the TRAFAC class translation factor GTPase superfamily. Classic translation factor GTPase family. PrfC subfamily.

It localises to the cytoplasm. Increases the formation of ribosomal termination complexes and stimulates activities of RF-1 and RF-2. It binds guanine nucleotides and has strong preference for UGA stop codons. It may interact directly with the ribosome. The stimulation of RF-1 and RF-2 is significantly reduced by GTP and GDP, but not by GMP. The protein is Peptide chain release factor 3 of Trichodesmium erythraeum (strain IMS101).